We begin with the raw amino-acid sequence, 504 residues long: Deoxyguanosinetriphosphate triphosphohydrolase (504 aa).

One can recognise an HD domain in the interval 66-273; it reads RLTHSMEVQQ…MEAADDISYC (208 aa).

It belongs to the dGTPase family. Type 1 subfamily. In terms of assembly, homotetramer. It depends on Mg(2+) as a cofactor.

The catalysed reaction is dGTP + H2O = 2'-deoxyguanosine + triphosphate + H(+). DGTPase preferentially hydrolyzes dGTP over the other canonical NTPs. The sequence is that of Deoxyguanosinetriphosphate triphosphohydrolase from Citrobacter koseri (strain ATCC BAA-895 / CDC 4225-83 / SGSC4696).